The primary structure comprises 2226 residues: Histone-lysine N-methyltransferase ash1 (2226 aa).

The disordered stretch occupies residues 1–145 (MSCSQNETAA…SDSEDDLPLK (145 aa)). Polar residues predominate over residues 32–52 (ITDQSSQSKSIKSATQFSVQR). Over residues 99–111 (AVSKKVKVKRKKL) the composition is skewed to basic residues. A phosphoserine mark is found at Ser-135, Ser-136, and Ser-138. Thr-200 and Thr-201 each carry phosphothreonine. A compositionally biased stretch (basic residues) spans 260–269 (PRKRRGRPKK). Disordered stretches follow at residues 260-324 (PRKR…IASS), 343-367 (RVLY…SSNK), 673-695 (AQQL…KRGL), 711-749 (SASA…HKLP), and 811-832 (KRHL…SNSP). Residues 261 to 273 (RKRRGRPKKVVPT) constitute a DNA-binding region (a.T hook 1). Over residues 294 to 306 (STTSTTQSTTPSP) the composition is skewed to low complexity. Residues 307-324 (KMQNENAVPTGSLPIASS) are compositionally biased toward polar residues. Low complexity predominate over residues 711-727 (SASASGTPNGSGSSNGN). 3 positions are modified to phosphoserine: Ser-740, Ser-831, and Ser-977. Residues 820–831 (SVSGAGSSASNS) show a composition bias toward low complexity. 2 disordered regions span residues 980-1026 (QQTT…DCER) and 1049-1230 (SVVA…TTSL). A compositionally biased stretch (acidic residues) spans 989–999 (HEPEFDPDDEP). DNA-binding regions (a.T hook) lie at residues 1065-1077 (GRPR…NREQ) and 1095-1107 (AKKR…QPVL). The segment covering 1108–1117 (EEPPPTPPPQ) has biased composition (pro residues). The span at 1186–1200 (AEAKRLDSIPTEHDP) shows a compositional bias: basic and acidic residues. The span at 1205–1219 (ESHNPGPQDYASCSE) shows a compositional bias: polar residues. The AWS domain maps to 1339–1387 (FDHPTCNCKNQGEKSCLDNCLNRMVYTECSPSNCPAGEKCRNQKIQRHA). One can recognise an SET domain in the interval 1390 to 1506 (PGVERFMTAD…EGEELTYDYN (117 aa)). The Post-SET domain maps to 1514–1530 (EGQPCRCNTPQCRGVIG). Disordered stretches follow at residues 1536-1575 (VKPL…GKDI) and 1616-1648 (RASD…SSPS). The span at 1556-1568 (GRQRKQKAKKHAQ) shows a compositional bias: basic residues. Composition is skewed to low complexity over residues 1619–1628 (DAAATASSPA) and 1639–1648 (RRPSTPSSPS). A Bromo domain is found at 1681–1789 (KMAVVLRDIC…DSYEQQKIAS (109 aa)). Positions 1808–1839 (PKEVLSSEEEPGKIAVKKSPGAKERDSPIVPL) are disordered. The PHD-type zinc-finger motif lies at 1857–1903 (VIRCICGLYKDEGLMIQCSKCMVWQHTECTKADIDADNYQCERCEPR). In terms of domain architecture, BAH spans 1952–2072 (KVLPTKKHTY…KTARFFSKAK (121 aa)). The segment at 2205–2226 (SGRGARQRKTQQSSSSSTANST) is disordered. A compositionally biased stretch (low complexity) spans 2214–2226 (TQQSSSSSTANST).

This sequence belongs to the class V-like SAM-binding methyltransferase superfamily. Histone-lysine methyltransferase family. SET2 subfamily. As to quaternary structure, component of a large multiprotein complex distinct from complexes containing ash2 or brm. Interacts (via SET domain) with trx (via SET domain). Interacts with nej/cbp. In terms of tissue distribution, expressed throughout development but is present at higher levels during the embryonic and pupal stages than during the larval stages. During the larval stages it accumulates primarily in imaginal disks.

The protein resides in the nucleus. It is found in the chromosome. It carries out the reaction L-lysyl(4)-[histone H3] + 3 S-adenosyl-L-methionine = N(6),N(6),N(6)-trimethyl-L-lysyl(4)-[histone H3] + 3 S-adenosyl-L-homocysteine + 3 H(+). Trithorax group (TrxG) protein that has histone methyltransferase activity. Specifically trimethylates 'Lys-4' of histone H3 (H3K4me3), a specific tag for epigenetic transcriptional activation. TrxG proteins are generally required to maintain the transcriptionally active state of homeotic genes throughout development. Does not act as a coactivator required for transcriptional activation, but specifically prevents inappropriate Polycomb Group (PcG) silencing of homeotic genes in cells in which they must stay transcriptionally active. This Drosophila melanogaster (Fruit fly) protein is Histone-lysine N-methyltransferase ash1 (ash1).